The sequence spans 460 residues: Bifunctional protein GlmU (460 aa).

Residues 1–232 are pyrophosphorylase; it reads MALNVVILAA…AIEVEGANNR (232 aa). UDP-N-acetyl-alpha-D-glucosamine-binding positions include 8–11, Lys22, Gln73, 78–79, 100–102, Gly137, Glu157, Asn172, and Asn230; these read LAAG, GT, and YGD. Asp102 provides a ligand contact to Mg(2+). Asn230 contributes to the Mg(2+) binding site. Residues 233-253 are linker; sequence VQLAQLERAYQAREAEKLMLA. Positions 254-460 are N-acetyltransferase; it reads GANLRDPSRI…GWQRPVKIKK (207 aa). 2 residues coordinate UDP-N-acetyl-alpha-D-glucosamine: Arg336 and Lys354. Catalysis depends on His366, which acts as the Proton acceptor. Positions 369 and 380 each coordinate UDP-N-acetyl-alpha-D-glucosamine. Residues Ala383, 389–390, Ser408, Ala426, and Arg443 contribute to the acetyl-CoA site; that span reads NY.

It in the N-terminal section; belongs to the N-acetylglucosamine-1-phosphate uridyltransferase family. This sequence in the C-terminal section; belongs to the transferase hexapeptide repeat family. In terms of assembly, homotrimer. It depends on Mg(2+) as a cofactor.

Its subcellular location is the cytoplasm. The catalysed reaction is alpha-D-glucosamine 1-phosphate + acetyl-CoA = N-acetyl-alpha-D-glucosamine 1-phosphate + CoA + H(+). It carries out the reaction N-acetyl-alpha-D-glucosamine 1-phosphate + UTP + H(+) = UDP-N-acetyl-alpha-D-glucosamine + diphosphate. It participates in nucleotide-sugar biosynthesis; UDP-N-acetyl-alpha-D-glucosamine biosynthesis; N-acetyl-alpha-D-glucosamine 1-phosphate from alpha-D-glucosamine 6-phosphate (route II): step 2/2. It functions in the pathway nucleotide-sugar biosynthesis; UDP-N-acetyl-alpha-D-glucosamine biosynthesis; UDP-N-acetyl-alpha-D-glucosamine from N-acetyl-alpha-D-glucosamine 1-phosphate: step 1/1. Its pathway is bacterial outer membrane biogenesis; LPS lipid A biosynthesis. Functionally, catalyzes the last two sequential reactions in the de novo biosynthetic pathway for UDP-N-acetylglucosamine (UDP-GlcNAc). The C-terminal domain catalyzes the transfer of acetyl group from acetyl coenzyme A to glucosamine-1-phosphate (GlcN-1-P) to produce N-acetylglucosamine-1-phosphate (GlcNAc-1-P), which is converted into UDP-GlcNAc by the transfer of uridine 5-monophosphate (from uridine 5-triphosphate), a reaction catalyzed by the N-terminal domain. This Shewanella baltica (strain OS223) protein is Bifunctional protein GlmU.